The sequence spans 839 residues: Taste receptor type 1 member 2 (839 aa).

A signal peptide spans 1-19 (MGPRAKTISSLFFLLWVLA). Residues 20-566 (EPAENSDFYL…VFLEWHEAPT (547 aa)) lie on the Extracellular side of the membrane. N-linked (GlcNAc...) asparagine glycosylation is found at Asn-84, Asn-248, Asn-292, Asn-312, Asn-368, Asn-428, Asn-487, and Asn-527. The helical transmembrane segment at 567 to 587 (IAVALLAALGFLSTLAILVIF) threads the bilayer. Residues 588–602 (WRHFQTPIVRSAGGP) are Cytoplasmic-facing. The helical transmembrane segment at 603-623 (MCFLMLTLLLVAYMVVPVYVG) threads the bilayer. At 624 to 635 (PPKVSTCLCRQA) the chain is on the extracellular side. The chain crosses the membrane as a helical span at residues 636–656 (LFPLCFTICISCIAVRSFQIV). The Cytoplasmic portion of the chain corresponds to 657–681 (CAFKMASRFPRAYSYWVRYQGPYVS). Residues 682–702 (MAFITVLKMVIVVIGMLATGL) form a helical membrane-spanning segment. Topologically, residues 703–727 (SPTTRTDPDDPKITIVSCNPNYRNS) are extracellular. Residues 728–748 (LLFNTSLDLLLSVVGFSFAYM) traverse the membrane as a helical segment. Topologically, residues 749 to 760 (GKELPTNYNEAK) are cytoplasmic. A helical transmembrane segment spans residues 761–781 (FITLSMTFYFTSSVSLCTFMS). The Extracellular segment spans residues 782 to 784 (AYS). The helical transmembrane segment at 785–805 (GVLVTIVDLLVTVLNLLAISL) threads the bilayer. Topologically, residues 806–839 (GYFGPKCYMILFYPERNTPAYFNSMIQGYTMRRD) are cytoplasmic.

Belongs to the G-protein coupled receptor 3 family. TAS1R subfamily. Forms heterodimers with TAS1R3.

The protein resides in the cell membrane. In terms of biological role, putative taste receptor. TAS1R2/TAS1R3 recognizes diverse natural and synthetic sweeteners. The sequence is that of Taste receptor type 1 member 2 (TAS1R2) from Homo sapiens (Human).